The primary structure comprises 820 residues: Serine/threonine-protein phosphatase 4 regulatory subunit 3-A (820 aa).

The 100-residue stretch at 1-100 (MSDTRRRVKV…DEIWEKICQV (100 aa)) folds into the WH1 domain. Residues 682–694 (ELWFNEDDEEEGE) are compositionally biased toward acidic residues. Disordered stretches follow at residues 682–712 (ELWF…FPEG) and 750–820 (AANG…RLGS). Positions 701–712 (EKTKPEDDFPEG) are enriched in basic and acidic residues. Composition is skewed to polar residues over residues 750–761 (AANGANSTNSKS) and 768–790 (PATS…STKG). Over residues 798 to 809 (YPDDEDEEEEED) the composition is skewed to acidic residues.

Belongs to the SMEK family. As to quaternary structure, serine/threonine-protein phosphatase 4 (PP4) occurs in different assemblies of the catalytic and one or more regulatory subunits.

Its function is as follows. Regulatory subunit of serine/threonine-protein phosphatase 4 (PP4). This is Serine/threonine-protein phosphatase 4 regulatory subunit 3-A from Xenopus laevis (African clawed frog).